The following is a 711-amino-acid chain: MAALGRPGSGPRAAVPAWKREILERKRAKLAALGGGAGPGAAEPEQRVLAESLGPLRENPFMLLEAERRRGGGAAGARLLERYRRVPGVRALRADSVLIIETVPGFPPAPPAPGAAQIRAAEVLVYGAPPGRVSRLLERFDPPAAPRRRGSPERARPPPPPPPPAPPRPPPAAPSPPAAPGPRGGGASPGARRSDFLQKTGSNSFTVHPRGLHRGAGARLLSNGHSAPEPRAGPANRLAGSPPGSGQWKPKVESGDPSLHPPPSPGTPSATPASPPASATPSQRQCVSAATSTNDSFEIRPAPKPVMETIPLGDLQARALASLRANSRNSFMVIPKSKASGAPPPEGRQSVELPKGDLGPASPSQELGSQPVPGGDGAPALGKSPLEVEAQWAVEEGACPRTATALADRAIRWQRPSSPPPFLPAASEEAEPAEGLRVPGLAKNSREYVRPGLPVTFIDEVDSEEAPQAAKLPYLPHPARPLHPARPGCVAELQPRGSNTFTVVPKRKPGTLQDQHFSQANREPRPREAEEEEASCLLGPTLKKRYPTVHEIEVIGGYLALQKSCLTKAGSSRKKMKISFNDKSLQTTFEYPSESSLEQEEEVDQQEEEEEEEEEEEEEEEGSGSEEKPFALFLPRATFVSSVRPESSRLPEGSSGLSSYTPKHSVAFSKWQEQALEQAPREAEPPPVEAMLTPASQNDLSDFRSEPALYF.

Disordered stretches follow at residues 134 to 305 (SRLL…APKP), 328 to 384 (RNSF…LGKS), and 414 to 438 (QRPS…GLRV). Residues 157–180 (PPPPPPPPAPPRPPPAAPSPPAAP) are compositionally biased toward pro residues. Residues 197–206 (LQKTGSNSFT) are compositionally biased toward polar residues. Residue Ser-241 is modified to Phosphoserine. Low complexity predominate over residues 267–282 (TPSATPASPPASATPS). Polar residues predominate over residues 283 to 296 (QRQCVSAATSTNDS). 3 positions are modified to phosphoserine: Ser-362, Ser-418, and Ser-463. 4 disordered regions span residues 500–535 (TFTV…EEAS), 572–630 (SRKK…EKPF), 642–662 (SVRP…SYTP), and 674–711 (QALE…ALYF). Polar residues-rich tracts occupy residues 512–521 (LQDQHFSQAN) and 581–590 (NDKSLQTTFE). The span at 597-624 (LEQEEEVDQQEEEEEEEEEEEEEEEGSG) shows a compositional bias: acidic residues.

Belongs to the taperin family. Interacts with GRXCR2; the interaction restricts TPRN to the stereocilum basal region. Interacts with actin ACTB; the interaction may stabilize stereocilia. Interacts with CLIC5. Interacts with PTPRQ. TPRN, CLIC5 and PTPQR form concentric rings at the base of stereocilia and may form a complex. Interacts with phosphatase PPP1CA; the interaction results in inhibition of PPC1A phosphatase activity. Interacts with DNA damage response proteins XRCC6/KU70, XRCC5/KU80, PARP1, TOP1 and TOP2A; these interactions recruit TPRN to sites of DNA damage where it may play a role in DNA repair. As to expression, expression is detected in fetal cochlea.

It localises to the cell projection. The protein resides in the stereocilium. The protein localises to the microvillus. It is found in the nucleus. Its subcellular location is the nucleoplasm. It localises to the cytoplasm. Its function is as follows. Essential for hearing. Required for maintenance of stereocilia on both inner and outer hair cells. Necessary for the integrity of the stereociliary rootlet. May act as an actin cytoskeleton regulator involved in the regulation of actin dynamics at the pointed end in hair cells. Forms rings at the base of stereocilia and binds actin filaments in the stereocilia which may stabilize the stereocilia. Acts as a strong inhibitor of PPP1CA phosphatase activity. Recruited to sites of DNA damage and may play a role in DNA damage repair. The polypeptide is Taperin (TPRN) (Homo sapiens (Human)).